A 582-amino-acid chain; its full sequence is NudC domain-containing protein 1 (582 aa).

Serine 7 is modified (phosphoserine). The CS domain occupies 272 to 360; sequence KVEPLYYWQQ…NEGLMWPELV (89 aa). Position 387 is a phosphoserine (serine 387).

The protein localises to the cytoplasm. It is found in the nucleus. This chain is NudC domain-containing protein 1, found in Mus musculus (Mouse).